A 397-amino-acid polypeptide reads, in one-letter code: MSIKNPSVKFIIFVLMICTFSIGYTEYAVMGILTSIANDFHIQVSSAGLLVTAYAASVCLTGPLVTIISVKLPRKPVLLGLMAIFILSNLMSALAPNFAVLAISRILSASIHGAFFAIAMVFASEMVPPEKRAAAAASMNGGLTVALMLGVPFGSYLGDVLNWRAVFSIITALGVIGFLGLMAAVPNRKPKVIPMLMNEWGVFKHKQVLFSFAITILGYSGVFIAYTFIEPILRHSAGFSTVGITGALFAYGLGGVAGNFFAGKVPLPLLTRTMIGVMIGLIGVLAVFPYIAIYPAAAIVATFLFGACAFGTPPLLQTKVISSSEGGTTIAAAVSVSAFNLANALGAWIGGMILNGTGSYSWLFAGGALMTACGLVLSTFAHLSEKKSVYEYQVNKG.

12 helical membrane-spanning segments follow: residues 10–30, 48–68, 76–96, 106–126, 141–161, 165–185, 209–229, 242–262, 274–294, 296–316, 334–354, and 363–383; these read FIIFVLMICTFSIGYTEYAVM, GLLVTAYAASVCLTGPLVTII, PVLLGLMAIFILSNLMSALAP, ILSASIHGAFFAIAMVFASEM, GGLTVALMLGVPFGSYLGDVL, AVFSIITALGVIGFLGLMAAV, LFSFAITILGYSGVFIAYTFI, VGITGALFAYGLGGVAGNFFA, MIGVMIGLIGVLAVFPYIAIY, AAAIVATFLFGACAFGTPPLL, VSVSAFNLANALGAWIGGMIL, and LFAGGALMTACGLVLSTFAHL.

Belongs to the major facilitator superfamily.

Its subcellular location is the cell membrane. This is an uncharacterized protein from Bacillus subtilis (strain 168).